The sequence spans 195 residues: Imidazoleglycerol-phosphate dehydratase (195 aa).

Belongs to the imidazoleglycerol-phosphate dehydratase family.

Its subcellular location is the cytoplasm. It catalyses the reaction D-erythro-1-(imidazol-4-yl)glycerol 3-phosphate = 3-(imidazol-4-yl)-2-oxopropyl phosphate + H2O. It functions in the pathway amino-acid biosynthesis; L-histidine biosynthesis; L-histidine from 5-phospho-alpha-D-ribose 1-diphosphate: step 6/9. The polypeptide is Imidazoleglycerol-phosphate dehydratase (Deinococcus radiodurans (strain ATCC 13939 / DSM 20539 / JCM 16871 / CCUG 27074 / LMG 4051 / NBRC 15346 / NCIMB 9279 / VKM B-1422 / R1)).